The following is a 210-amino-acid chain: Uracil phosphoribosyltransferase (210 aa).

Residues Arg80, Arg105, and 132 to 140 (DPMLATGGS) contribute to the 5-phospho-alpha-D-ribose 1-diphosphate site. Residues Ile195 and 200 to 202 (GDA) contribute to the uracil site. A 5-phospho-alpha-D-ribose 1-diphosphate-binding site is contributed by Asp201.

This sequence belongs to the UPRTase family. Requires Mg(2+) as cofactor.

It catalyses the reaction UMP + diphosphate = 5-phospho-alpha-D-ribose 1-diphosphate + uracil. It participates in pyrimidine metabolism; UMP biosynthesis via salvage pathway; UMP from uracil: step 1/1. With respect to regulation, allosterically activated by GTP. Functionally, catalyzes the conversion of uracil and 5-phospho-alpha-D-ribose 1-diphosphate (PRPP) to UMP and diphosphate. This is Uracil phosphoribosyltransferase from Thermoanaerobacter pseudethanolicus (strain ATCC 33223 / 39E) (Clostridium thermohydrosulfuricum).